The following is a 143-amino-acid chain: Hemoglobin subunit alpha-2 (143 aa).

N-acetylserine is present on Ser-2. The region spanning 2 to 143 (SLSAKDKATV…LALALSEKYR (142 aa)) is the Globin domain. Position 60 (His-60) interacts with O2. His-89 lines the heme b pocket.

This sequence belongs to the globin family. As to quaternary structure, hb 2 is a heterotetramer of two alpha-2 and two beta-1 chains. Hb 3 is a heterotetramer of two alpha-2 and two beta-2 chains. In terms of tissue distribution, red blood cells.

Involved in oxygen transport from gills to the various peripheral tissues. This Boreogadus saida (Polar cod) protein is Hemoglobin subunit alpha-2 (hba2).